Reading from the N-terminus, the 642-residue chain is Ribosome biogenesis protein BOP1 homolog (642 aa).

Residues 1 to 28 are disordered; that stretch reads MIHKRMNSTELERTSKKIDDYDSSDEED. A compositionally biased stretch (basic and acidic residues) spans 10–20; it reads ELERTSKKIDD. WD repeat units lie at residues 311 to 351, 353 to 393, 472 to 510, 513 to 552, 556 to 595, and 612 to 642; these read GHSG…CLKT, SLDG…DRHR, RLKG…LKKK, TGSQ…KPWK, HHTA…DSLK, and KNGL…ALFT.

The protein belongs to the WD repeat BOP1/ERB1 family.

Its subcellular location is the nucleus. The protein localises to the nucleolus. It is found in the nucleoplasm. Functionally, required for maturation of ribosomal RNAs and formation of the large ribosomal subunit. This chain is Ribosome biogenesis protein BOP1 homolog, found in Brugia malayi (Filarial nematode worm).